A 511-amino-acid polypeptide reads, in one-letter code: 2-isopropylmalate synthase (511 aa).

Residues 5–267 (IQIFDTTLRD…ESQINLEETK (263 aa)) form the Pyruvate carboxyltransferase domain. Residues Asp14, His202, His204, and Asn238 each contribute to the Mn(2+) site. The segment at 391–511 (QLDNLQLQYV…EYELKEGIRT (121 aa)) is regulatory domain.

This sequence belongs to the alpha-IPM synthase/homocitrate synthase family. LeuA type 1 subfamily. Homodimer. Requires Mn(2+) as cofactor.

Its subcellular location is the cytoplasm. It catalyses the reaction 3-methyl-2-oxobutanoate + acetyl-CoA + H2O = (2S)-2-isopropylmalate + CoA + H(+). The protein operates within amino-acid biosynthesis; L-leucine biosynthesis; L-leucine from 3-methyl-2-oxobutanoate: step 1/4. In terms of biological role, catalyzes the condensation of the acetyl group of acetyl-CoA with 3-methyl-2-oxobutanoate (2-ketoisovalerate) to form 3-carboxy-3-hydroxy-4-methylpentanoate (2-isopropylmalate). The chain is 2-isopropylmalate synthase from Staphylococcus epidermidis (strain ATCC 35984 / DSM 28319 / BCRC 17069 / CCUG 31568 / BM 3577 / RP62A).